The primary structure comprises 832 residues: MGSSLRSFIKDVRGAKTLADERAIITKQSAKIRTKLRDDHLPHEKRRVNIQKLLYLYILGEKTHFGQVESINLIASDDFVDKRLGYLAATLLLDESEDLLTLLTNMLNNDLHHPNKYAVSLALTSLGFLSSPELARDLYPDVENIIKNSRDPFLLKKALQCAAKLIFKDVSLLEIFNIEDITKILSSHSICTHGVLLGVTKIIQSILLIGLNRKKDEDEDEDGIDYSNDILSPLSLLLRDFFIRLENMNSKNIEPGYDVQGICDPFLQCEIIYTLKLYFQVGELLNSNNVLDYKDNFCDLLTRIATNTDSTKNSGQAILYETVKTIFSLDLNQPLRVLGINILAKFLAGKDNNTKYVSLNTLLKVVPQEPTAVQRHRKFISHCLQDTDVSIRMRALELSFAILDDSNLVELVNELMKFLAKQDEDSKDLIIYTIDHLIDTFDTRVVKDESWKLDVFFNILKLVGSFINYEKINDILIIINNTSQLSDKSEFLRKMLTISLNGTSAEISEENIGWQLVLIWCIGEYGDLVLNEGNKNGADIINESSITDYLLTLQELYTATNLKIINYILTAALKLSVRFHDAKNIEKLRQLILSYTDSTDLSLQMKSNQYEIFFNQSISVKKIILETMPKFEKITEEQDNGKALSKNLISNEPVDLLSDLLGEDSKAESKASTGDNVKPIDILEEIFGEKNDIAQVPKNANKEESINHSSAVEANSGVTLPLDANKIYDSSSLNVYASLLSANSGLAHLDLYFQAKSLISDLKTFCAVPKAQKLTLGQLYPSSTINASQICKQSLKISGSGKLKLRVKLDFHLNGSSSITNEQFDHKFDETL.

In terms of domain architecture, GAE spans 733–832 (LNVYASLLSA…QFDHKFDETL (100 aa)).

In terms of assembly, adapter protein complex 1 (AP-1) is a heterotetramer composed of two large adaptins (gamma-type subunit APL4 and beta-type subunit APL2), a medium adaptin (mu-type subunit APM1) and a small adaptin (sigma-type subunit APS1). AP-1 interacts with clathrin. Also a component of the AP-1R complex composed of at least APM2, APL4 and APS1.

It localises to the cytoplasm. The protein localises to the golgi apparatus membrane. Its subcellular location is the cytoplasmic vesicle. The protein resides in the clathrin-coated vesicle membrane. Its function is as follows. Adaptins are components of the adapter complexes which link clathrin to receptors in coated vesicles. Clathrin-associated protein complexes are believed to interact with the cytoplasmic tails of membrane proteins, leading to their selection and concentration. The AP-1 complex interacts directly with clathrin. Component of the AP-1-related (AP-1R) complex, an adapter protein complex that mediates sorting of cargo SNARE SNC1. In contrast to the APM1-containing AP-1 complex, AP-1R is incapable of sorting CHS3. The sequence is that of AP-1 complex subunit gamma-1 (APL4) from Saccharomyces cerevisiae (strain ATCC 204508 / S288c) (Baker's yeast).